Reading from the N-terminus, the 1162-residue chain is PAN2-PAN3 deadenylation complex catalytic subunit PAN2 (1162 aa).

WD repeat units follow at residues 27-66 (AKEKSATKMAFDQDVNLIWVGDTYGRVSSYDPSYSLYTRH), 153-193 (NTVQ…VVKT), 196-233 (GHSCMVSSMDFRDHTLVTAGKSKRFNMMYPDQFVNVYD), and 300-339 (HPCQSVTQLQLSPSGDYIAFIEHDNNINMWSRSNGMTGFT). Residues 341–491 (TATTILEYPD…LMNYKPSNDR (151 aa)) form a linker region. The interval 401-443 (VPLPPKSSAASSSHTALSTSSDSRPNTARSGNPSSGGQKYRLL) is disordered. Residues 407-423 (SSAASSSHTALSTSSDS) are compositionally biased toward low complexity. The span at 424–437 (RPNTARSGNPSSGG) shows a compositional bias: polar residues. A USP domain is found at 492 to 904 (EVPPAFTKLQ…TPEIAIYSDA (413 aa)). One can recognise an Exonuclease domain in the interval 956-1126 (VALDAEFVAL…IEDAYTALVL (171 aa)). Residues Asp959, Glu961, Asp1068, and Asp1119 each coordinate a divalent metal cation.

Belongs to the peptidase C19 family. PAN2 subfamily. In terms of assembly, forms a heterotrimer with an asymmetric homodimer of the regulatory subunit PAN3 to form the poly(A)-nuclease (PAN) deadenylation complex. The cofactor is a divalent metal cation.

It is found in the cytoplasm. The catalysed reaction is Exonucleolytic cleavage of poly(A) to 5'-AMP.. With respect to regulation, positively regulated by the regulatory subunit PAN3. In terms of biological role, catalytic subunit of the poly(A)-nuclease (PAN) deadenylation complex, one of two cytoplasmic mRNA deadenylases involved in mRNA turnover. PAN specifically shortens poly(A) tails of RNA and the activity is stimulated by poly(A)-binding protein PAB1. PAN deadenylation is followed by rapid degradation of the shortened mRNA tails by the CCR4-NOT complex. Deadenylated mRNAs are then degraded by two alternative mechanisms, namely exosome-mediated 3'-5' exonucleolytic degradation, or deadenylation-dependent mRNA decaping and subsequent 5'-3' exonucleolytic degradation by XRN1. May also be involved in post-transcriptional maturation of mRNA poly(A) tails. The protein is PAN2-PAN3 deadenylation complex catalytic subunit PAN2 of Eremothecium gossypii (strain ATCC 10895 / CBS 109.51 / FGSC 9923 / NRRL Y-1056) (Yeast).